The primary structure comprises 215 residues: Large ribosomal subunit protein uL4 (215 aa).

The tract at residues 43-101 (HQRQGTSKTKERGEVRGSGRKLYRQKGTGNARVGDAQSPIRRGGGRAHGARPRDYAHDL) is disordered. Over residues 50–59 (KTKERGEVRG) the composition is skewed to basic and acidic residues.

This sequence belongs to the universal ribosomal protein uL4 family. As to quaternary structure, part of the 50S ribosomal subunit.

Its function is as follows. One of the primary rRNA binding proteins, this protein initially binds near the 5'-end of the 23S rRNA. It is important during the early stages of 50S assembly. It makes multiple contacts with different domains of the 23S rRNA in the assembled 50S subunit and ribosome. Forms part of the polypeptide exit tunnel. This Salinibacter ruber (strain DSM 13855 / M31) protein is Large ribosomal subunit protein uL4.